The sequence spans 120 residues: MVKMVIVVRSDIKMGKGKMAAQVAHAAVTLVISIINSNNSRWKEWLNEWLQQGQPKIVVKANSLDEIILRSKKAETMNLPFSIIEDAGKTQLEPGTITCLGIGPAPENLIDPITGDLKLL.

The protein belongs to the PTH2 family.

Its subcellular location is the cytoplasm. It catalyses the reaction an N-acyl-L-alpha-aminoacyl-tRNA + H2O = an N-acyl-L-amino acid + a tRNA + H(+). The natural substrate for this enzyme may be peptidyl-tRNAs which drop off the ribosome during protein synthesis. This chain is Peptidyl-tRNA hydrolase, found in Saccharolobus islandicus (strain Y.N.15.51 / Yellowstone #2) (Sulfolobus islandicus).